Here is a 239-residue protein sequence, read N- to C-terminus: Large ribosomal subunit protein uL1 (239 aa).

The protein belongs to the universal ribosomal protein uL1 family. As to quaternary structure, part of the 50S ribosomal subunit.

Its function is as follows. Binds directly to 23S rRNA. The L1 stalk is quite mobile in the ribosome, and is involved in E site tRNA release. Functionally, protein L1 is also a translational repressor protein, it controls the translation of the L11 operon by binding to its mRNA. The polypeptide is Large ribosomal subunit protein uL1 (Rickettsia africae (strain ESF-5)).